The sequence spans 232 residues: DQGAGVTYLEPSASQIGHKESIKDTARVLGRMYDGIEYRGFGQDVVEELAKYAGVPVFNGLTNEFHPTQMLADALTMREHSGKPLSQTAFAYVGDARYNMANSLLVLGAKLGMDVRIGAPKTLWPSEHIVARARAVAKETGGRILLTENAEEAVKGVDFIHTDVWVSMGEPKEAWQERIDLLKDYRVTPELMAASGNPQVKFMHCLPAFHNRETKVGEWIYETFGLNGVEVT.

Carbamoyl phosphate contacts are provided by residues Q15, R39, and 66–69; that span reads HPTQ. L-ornithine contacts are provided by residues N99, D163, and 167–168; that span reads SM. Carbamoyl phosphate is bound by residues 204 to 207 and T232; that span reads HCLP.

The protein belongs to the aspartate/ornithine carbamoyltransferase superfamily. OTCase family.

Its subcellular location is the cytoplasm. The catalysed reaction is carbamoyl phosphate + L-ornithine = L-citrulline + phosphate + H(+). The protein operates within amino-acid biosynthesis; L-arginine biosynthesis; L-arginine from L-ornithine and carbamoyl phosphate: step 1/3. Functionally, reversibly catalyzes the transfer of the carbamoyl group from carbamoyl phosphate (CP) to the N(epsilon) atom of ornithine (ORN) to produce L-citrulline. This chain is Ornithine carbamoyltransferase (argF), found in Neisseria pharyngis.